Consider the following 228-residue polypeptide: Probable septum site-determining protein MinC (228 aa).

It belongs to the MinC family. As to quaternary structure, interacts with MinD and FtsZ.

Cell division inhibitor that blocks the formation of polar Z ring septums. Rapidly oscillates between the poles of the cell to destabilize FtsZ filaments that have formed before they mature into polar Z rings. Prevents FtsZ polymerization. The sequence is that of Probable septum site-determining protein MinC from Bacillus cereus (strain B4264).